Consider the following 196-residue polypeptide: Venom platylysin (196 aa).

The protein belongs to the redulysin-like family. In terms of tissue distribution, expressed by the venom gland.

The protein resides in the secreted. In terms of biological role, probable insecticidal toxin that has been detected in a semi-pure insecticidal fraction. The sequence is that of Venom platylysin from Platymeris biguttatus (Two-spotted assassin bug).